The following is a 640-amino-acid chain: Phosphatidylinositol-binding clathrin assembly protein (640 aa).

Ser2 is subject to N-acetylserine. Residues 14–145 (QHSVTGSAVS…VSYRQVAFDF (132 aa)) form the ENTH domain. Residues Ser16 and Ser20 each carry the phosphoserine modification. Residues 221 to 294 (KYFDMKKNQC…LEGKKIKDST (74 aa)) form an interaction with PIMREG region. Residue Lys238 forms a Glycyl lysine isopeptide (Lys-Gly) (interchain with G-Cter in SUMO2) linkage. Phosphoserine occurs at positions 303 and 315. The segment at 543-568 (NGTTKNDVSCSQPGEKKLTGGSNWQP) is disordered. The span at 544–554 (GTTKNDVSCSQ) shows a compositional bias: polar residues.

This sequence belongs to the PICALM/SNAP91 family. As to quaternary structure, binds to clathrin; involves primarily the C-terminal sequences, but the full-length protein is required for full binding capacity. Binds phosphatidylinositol 4,5- bisphosphate. Interacts with PIMREG; this interaction may change the subcellular location into the nucleus. Interacts with AP2A1 (via its alpha-appendage domain). Interacts (via N-terminus) with VAMP2; VAMP3; VAMP7 and VAMP8 (Via N-terminus). Interacts with LC3/MAP1LC3A. In terms of tissue distribution, isoform 2 was found in most tissues examined. Isoform 1 has an overlapping expression pattern but is absent from lung, heart and pancreas. Both isoforms are widely expressed in the brain, higher levels are seen in hippocampus, dentate gyrus, medial habenula nucleus and cerebellar granule cells.

The protein localises to the cell membrane. It localises to the membrane. Its subcellular location is the clathrin-coated pit. It is found in the golgi apparatus. The protein resides in the cytoplasmic vesicle. The protein localises to the clathrin-coated vesicle. It localises to the nucleus. Its function is as follows. Cytoplasmic adapter protein that plays a critical role in clathrin-mediated endocytosis which is important in processes such as internalization of cell receptors, synaptic transmission or removal of apoptotic cells. Recruits AP-2 and attaches clathrin triskelions to the cytoplasmic side of plasma membrane leading to clathrin-coated vesicles (CCVs) assembly. Furthermore, regulates clathrin-coated vesicle size and maturation by directly sensing and driving membrane curvature. In addition to binding to clathrin, mediates the endocytosis of small R-SNARES (Soluble NSF Attachment Protein REceptors) between plasma membranes and endosomes including VAMP2, VAMP3, VAMP4, VAMP7 or VAMP8. In turn, PICALM-dependent SNARE endocytosis is required for the formation and maturation of autophagic precursors. Modulates thereby autophagy and the turnover of autophagy substrates such as MAPT/TAU or amyloid precursor protein cleaved C-terminal fragment (APP-CTF). This chain is Phosphatidylinositol-binding clathrin assembly protein (Picalm), found in Rattus norvegicus (Rat).